We begin with the raw amino-acid sequence, 479 residues long: Heparin cofactor 2 (479 aa).

The first 23 residues, 1–23, serve as a signal peptide directing secretion; sequence MKHPAYTLLLSLIMSMCAGSKGL. N31 is a glycosylation site (N-linked (GlcNAc...) asparagine). A run of 2 repeats spans residues 55 to 65 and 69 to 79. Residues 55-79 are 2 X 11 AA approximate repeats, Asp/Glu-rich (acidic) (hirudin-like); the sequence is GEEDDDYLDLEKLLSEDDDYIYVVD. Sulfotyrosine occurs at positions 61 and 74. An N-linked (GlcNAc...) asparagine glycan is attached at N168. The glycosaminoglycan-binding site stretch occupies residues 172–192; that stretch reads KYEVTTIHNLFRKLTHRLFRR. N-linked (GlcNAc...) asparagine glycosylation is found at N367 and N403.

It belongs to the serpin family. In terms of processing, different composition of the N-linked oligosaccharides appears to yield a 68-kDa and a 72-kDa form.

Its function is as follows. Thrombin inhibitor activated by the glycosaminoglycans, heparin or dermatan sulfate. In the presence of the latter, HC-II becomes the predominant thrombin inhibitor in place of antithrombin III (AT). The protein is Heparin cofactor 2 (Serpind1) of Rattus norvegicus (Rat).